The following is a 136-amino-acid chain: Small ribosomal subunit protein uS8 (136 aa).

The protein belongs to the universal ribosomal protein uS8 family. In terms of assembly, part of the 30S ribosomal subunit. Contacts proteins S5 and S12.

Functionally, one of the primary rRNA binding proteins, it binds directly to 16S rRNA central domain where it helps coordinate assembly of the platform of the 30S subunit. This Synechococcus sp. (strain JA-2-3B'a(2-13)) (Cyanobacteria bacterium Yellowstone B-Prime) protein is Small ribosomal subunit protein uS8.